A 185-amino-acid chain; its full sequence is Photosystem I assembly protein Ycf4 (185 aa).

2 helical membrane passes run 24 to 44 (YLIG…SISS) and 66 to 86 (IIMG…WYLV).

This sequence belongs to the Ycf4 family.

It is found in the cellular thylakoid membrane. Seems to be required for the assembly of the photosystem I complex. In Prochlorococcus marinus (strain MIT 9515), this protein is Photosystem I assembly protein Ycf4.